The chain runs to 284 residues: uncharacterized protein (284 aa).

Residues 1–20 (MLHNIQSILQFLLFVSSVQA) form the signal peptide. Residues 38 to 121 (CFEFKKNYWI…FTVNFFRNIC (84 aa)) form the Apple domain. 3 disulfide bridges follow: cysteine 38/cysteine 121, cysteine 63/cysteine 89, and cysteine 67/cysteine 77. An N-linked (GlcNAc...) asparagine glycan is attached at asparagine 256. The helical transmembrane segment at 264-284 (SSTGLKFTTGLLIILVVFLFL) threads the bilayer.

It localises to the membrane. This is an uncharacterized protein from Caenorhabditis elegans.